Reading from the N-terminus, the 414-residue chain is uncharacterized protein (414 aa).

One can recognise a Nop domain in the interval 246–360 (EAPNITKLAG…LNKRVEEIRR (115 aa)). The disordered stretch occupies residues 358–414 (IRRKYPKPPKKKKKEKPKAKKKEKKGKKEKSKKKKDKKKDKKGKKERKVIGKTKSRK). The span at 361–414 (KYPKPPKKKKKEKPKAKKKEKKGKKEKSKKKKDKKKDKKGKKERKVIGKTKSRK) shows a compositional bias: basic residues.

It belongs to the NOP5/NOP56 family.

This is an uncharacterized protein from Methanocaldococcus jannaschii (strain ATCC 43067 / DSM 2661 / JAL-1 / JCM 10045 / NBRC 100440) (Methanococcus jannaschii).